A 184-amino-acid polypeptide reads, in one-letter code: Shikimate kinase (184 aa).

An ATP-binding site is contributed by 12 to 17; it reads GSGKST. Ser16 serves as a coordination point for Mg(2+). Residues Asp34, Arg58, and Gly80 each coordinate substrate. Arg117 serves as a coordination point for ATP. Residue Arg136 coordinates substrate. Residue Arg153 coordinates ATP. The segment at 163 to 184 is disordered; sequence MSRLDDPTPNTSPSSTASGAAT. Residues 169–184 show a composition bias toward low complexity; that stretch reads PTPNTSPSSTASGAAT.

This sequence belongs to the shikimate kinase family. In terms of assembly, monomer. Mg(2+) is required as a cofactor.

It localises to the cytoplasm. It catalyses the reaction shikimate + ATP = 3-phosphoshikimate + ADP + H(+). The protein operates within metabolic intermediate biosynthesis; chorismate biosynthesis; chorismate from D-erythrose 4-phosphate and phosphoenolpyruvate: step 5/7. Catalyzes the specific phosphorylation of the 3-hydroxyl group of shikimic acid using ATP as a cosubstrate. This is Shikimate kinase from Mycobacterium marinum (strain ATCC BAA-535 / M).